Reading from the N-terminus, the 61-residue chain is Small ribosomal subunit protein uS14 (61 aa).

Residues Cys24, Cys27, Cys40, and Cys43 each coordinate Zn(2+).

It belongs to the universal ribosomal protein uS14 family. Zinc-binding uS14 subfamily. In terms of assembly, part of the 30S ribosomal subunit. Contacts proteins S3 and S10. It depends on Zn(2+) as a cofactor.

In terms of biological role, binds 16S rRNA, required for the assembly of 30S particles and may also be responsible for determining the conformation of the 16S rRNA at the A site. The protein is Small ribosomal subunit protein uS14 of Frankia alni (strain DSM 45986 / CECT 9034 / ACN14a).